The chain runs to 183 residues: Putative manganese efflux pump MntP (183 aa).

Helical transmembrane passes span 8–28 (IIALSMMALALGMDAFSVALG), 40–60 (FYIGLTIGLFHILMPLAGMAV), 72–92 (ATYAGGALLLWLGGQMIIASF), 108–128 (LFFAFSVSLDSFSVGLSLGIF), 133–153 (MVTILLFGLFSMVLTWVGLFV), and 163–183 (SYSEALGGSILLAFGLKLLFL).

This sequence belongs to the MntP (TC 9.B.29) family.

The protein localises to the cell membrane. In terms of biological role, probably functions as a manganese efflux pump. This Geobacillus kaustophilus (strain HTA426) protein is Putative manganese efflux pump MntP.